The chain runs to 401 residues: Nicotinate phosphoribosyltransferase (401 aa).

His221 bears the Phosphohistidine; by autocatalysis mark.

The protein belongs to the NAPRTase family. Post-translationally, transiently phosphorylated on a His residue during the reaction cycle. Phosphorylation strongly increases the affinity for substrates and increases the rate of nicotinate D-ribonucleotide production. Dephosphorylation regenerates the low-affinity form of the enzyme, leading to product release.

It catalyses the reaction nicotinate + 5-phospho-alpha-D-ribose 1-diphosphate + ATP + H2O = nicotinate beta-D-ribonucleotide + ADP + phosphate + diphosphate. It participates in cofactor biosynthesis; NAD(+) biosynthesis; nicotinate D-ribonucleotide from nicotinate: step 1/1. Catalyzes the synthesis of beta-nicotinate D-ribonucleotide from nicotinate and 5-phospho-D-ribose 1-phosphate at the expense of ATP. The chain is Nicotinate phosphoribosyltransferase from Erwinia tasmaniensis (strain DSM 17950 / CFBP 7177 / CIP 109463 / NCPPB 4357 / Et1/99).